Here is a 561-residue protein sequence, read N- to C-terminus: NAD(P)H-quinone oxidoreductase chain 4 2 (561 aa).

The next 14 membrane-spanning stretches (helical) occupy residues 6-26, 36-56, 87-107, 115-135, 136-156, 169-189, 210-230, 244-264, 275-295, 312-332, 333-353, 376-396, 419-439, and 490-510; these read FPWL…IPFI, WYGL…FWKY, LSMP…FAAW, LFYF…VAQD, LMLL…LISI, FLLY…GMAL, AFEL…LAVF, SAPV…YGLI, HVYF…YGGL, VAHM…GISG, ALLQ…LAGV, IFAL…MSGF, VTVF…LSML, and VAIA…PKIA.

This sequence belongs to the complex I subunit 4 family.

The protein resides in the cellular thylakoid membrane. The catalysed reaction is a plastoquinone + NADH + (n+1) H(+)(in) = a plastoquinol + NAD(+) + n H(+)(out). It catalyses the reaction a plastoquinone + NADPH + (n+1) H(+)(in) = a plastoquinol + NADP(+) + n H(+)(out). Functionally, NDH-1 shuttles electrons from NAD(P)H, via FMN and iron-sulfur (Fe-S) centers, to quinones in the respiratory chain. The immediate electron acceptor for the enzyme in this species is believed to be plastoquinone. Couples the redox reaction to proton translocation (for every two electrons transferred, four hydrogen ions are translocated across the cytoplasmic membrane), and thus conserves the redox energy in a proton gradient. This Trichodesmium erythraeum (strain IMS101) protein is NAD(P)H-quinone oxidoreductase chain 4 2.